A 655-amino-acid chain; its full sequence is E3 ubiquitin-protein ligase TRIM32 (655 aa).

Residues 21-66 (CPICMESFTEEQLRPKLLHCGHTICRQCLEKLLASSINGVRCPFCS) form an RING-type zinc finger. Position 56 is a phosphoserine; by CHEK2 (Ser-56). The segment at 96–139 (VGLLMCRGCGRRLPRQFCRSCGVVLCEPCREADHQPPGHCTLPV) adopts a B box-type; atypical zinc-finger fold. Residues Cys-101, Cys-104, Cys-124, and His-129 each coordinate Zn(2+). Residues 139–198 (VKEAAEERRRDFGEKLTRLRELTGELQRRKAALEGVSRDLQARYKAVLQEYGHEERRIQE) are a coiled coil. The segment at 327-347 (MDMSPEEVAPSPRASPAKQRS) is disordered. Residues Ser-330, Ser-337, and Ser-341 each carry the phosphoserine modification. NHL repeat units follow at residues 360 to 403 (LKKM…FNRK), 417 to 460 (DSFV…YTMD), 461 to 501 (GHCV…FTVD), 564 to 607 (GRQI…FPKG), and 608 to 648 (GGYS…YSYH).

It belongs to the TRIM/RBCC family. As to quaternary structure, it self-associates. Interacts with DTNBP1. Interacts with PIAS4/PIASY upon treatment with UVB and TNF-alpha. Interacts with AMBRA1; promoting activation of ULK1 through unanchored 'Lys-63'-linked polyubiquitin chains. Interacts with TICAM1 and TAX1BP1; these interactions target TICAM1 to TAX1BP1-mediated selective autophagic degradation. In terms of processing, ubiquitinated. Post-translationally, phosphorylation at Ser-56 by CHEK2 under oxidative stress, activates the E3 ligase activity and promotes ATG7 ubiquitination leading to positive regulation of the autophagosme assembly. In terms of tissue distribution, ubiquitous. High expression in brain.

It localises to the cytoplasm. It catalyses the reaction S-ubiquitinyl-[E2 ubiquitin-conjugating enzyme]-L-cysteine + [acceptor protein]-L-lysine = [E2 ubiquitin-conjugating enzyme]-L-cysteine + N(6)-ubiquitinyl-[acceptor protein]-L-lysine.. It participates in protein modification; protein ubiquitination. In terms of biological role, E3 ubiquitin ligase that plays a role in various biological processes including neural stem cell differentiation, innate immunity, inflammatory resonse and autophagy. Plays a role in virus-triggered induction of IFN-beta and TNF-alpha by mediating the ubiquitination of STING1. Mechanistically, targets STING1 for 'Lys-63'-linked ubiquitination which promotes the interaction of STING1 with TBK1. Regulates bacterial clearance and promotes autophagy in Mycobacterium tuberculosis-infected macrophages. Negatively regulates TLR3/4-mediated innate immune and inflammatory response by triggering the autophagic degradation of TICAM1 in an E3 activity-independent manner. Plays an essential role in oxidative stress induced cell death by inducing loss of transmembrane potential and enhancing mitochondrial reactive oxygen species (ROS) production during oxidative stress conditions. Ubiquitinates XIAP and targets it for proteasomal degradation. Ubiquitinates DTNBP1 (dysbindin) and promotes its degradation. May ubiquitinate BBS2. Ubiquitinates PIAS4/PIASY and promotes its degradation in keratinocytes treated with UVB and TNF-alpha. Also acts as a regulator of autophagy by mediating formation of unanchored 'Lys-63'-linked polyubiquitin chains that activate ULK1: interaction with AMBRA1 is required for ULK1 activation. Positively regulates dendritic branching by promoting ubiquitination and subsequent degradation of the epigenetic factor CDYL. Under metabolic stress and phosphorylation by CHK2, mediates 'Lys-63'-linked ubiquitination of ATG7 at 'Lys-41' to initiate autophagy. The chain is E3 ubiquitin-protein ligase TRIM32 from Mus musculus (Mouse).